A 97-amino-acid polypeptide reads, in one-letter code: YcgL domain-containing protein PputW619_3899 (97 aa).

The YcgL domain maps to arginine 3–proline 87.

The chain is YcgL domain-containing protein PputW619_3899 from Pseudomonas putida (strain W619).